Reading from the N-terminus, the 247-residue chain is MTNIWFDVAEVSVGQHWYWQLGGYSLHGQVLITSWIVVAVIGVICLLGTQNLQPVSGGSAATAPKGLQNLTEYITEFIRDLAKTQIGEEDYLKWVPFLGTIFLFIFVSNWSGALIPWRILELPNGELAAPTNDINTTVALALLTSIAYFYAGISKKGLGYFKRYISPAAFLLPINILEDLTKPLSLSFRLFGNILADELVVGVLVSLVPLVVPIPIMLLGLFTSAIQALVFATLAGAYIGESVEDHH.

A run of 5 helical transmembrane segments spans residues 28 to 48 (GQVLITSWIVVAVIGVICLLG), 95 to 115 (VPFLGTIFLFIFVSNWSGALI), 134 to 154 (INTTVALALLTSIAYFYAGIS), 199 to 219 (LVVGVLVSLVPLVVPIPIMLL), and 220 to 240 (GLFTSAIQALVFATLAGAYIG).

This sequence belongs to the ATPase A chain family. F-type ATPases have 2 components, CF(1) - the catalytic core - and CF(0) - the membrane proton channel. CF(1) has five subunits: alpha(3), beta(3), gamma(1), delta(1), epsilon(1). CF(0) has four main subunits: a, b, b' and c.

It localises to the plastid. It is found in the chloroplast thylakoid membrane. Functionally, key component of the proton channel; it plays a direct role in the translocation of protons across the membrane. In Chlorella vulgaris (Green alga), this protein is ATP synthase subunit a, chloroplastic.